The following is a 224-amino-acid chain: MPGGLLLGDVAPNFEANTTVGRIRFHDFLGDSWGILFSHPRDFTPVCTTELGRAAKLAPEFAKRNVKLIALSIDSVEDHLAWSKDINAYNCEEPTEKLPFPIIDDRNRELAILLGMLDPAEKDEKGMPVTARVVFVFGPDKKLKLSILYPATTGRNFDEILRVVISLQLTAEKRVATPVDWKDGDSVMVLPTIPEEEAKKLFPKGVFTKELPSGKKYLRYTPQP.

Positions 5–169 (LLLGDVAPNF…ILRVVISLQL (165 aa)) constitute a Thioredoxin domain. The interval 31 to 40 (DSWGILFSHP) is required and sufficient for targeting to lysosomes and lamellar bodies. At threonine 44 the chain carries Phosphothreonine. Cysteine 47 (cysteine sulfenic acid (-SOH) intermediate; for peroxidase activity) is an active-site residue. Lysine 63 carries the N6-acetyllysine modification. Tyrosine 89 carries the post-translational modification Phosphotyrosine. Catalysis depends on aspartate 140, which acts as the For phospholipase activity. Threonine 177 bears the Phosphothreonine; by MAPK mark. Lysine 209 bears the N6-acetyllysine; alternate mark. An N6-succinyllysine; alternate modification is found at lysine 209.

It belongs to the peroxiredoxin family. Prx6 subfamily. In terms of assembly, homodimer. Interacts with GSTP1; mediates PRDX6 glutathionylation and regeneration. Interacts with APEX1. Interacts with STH. May interact with FAM168B. May interact with HTR2A. In terms of processing, irreversibly inactivated by overoxidation of Cys-47 to sulfinic acid (Cys-SO(2)H) and sulfonic acid (Cys-SO(3)H) forms upon oxidative stress. Post-translationally, phosphorylation at Thr-177 by MAP kinases increases the phospholipase activity of the enzyme. The phosphorylated form exhibits a greater lysophosphatidylcholine acyltransferase activity compared to the non-phosphorylated form.

The protein resides in the cytoplasm. It localises to the lysosome. The catalysed reaction is a hydroperoxide + 2 glutathione = an alcohol + glutathione disulfide + H2O. The enzyme catalyses a 1,2-diacyl-sn-glycero-3-phosphocholine + H2O = a 1-acyl-sn-glycero-3-phosphocholine + a fatty acid + H(+). It catalyses the reaction a 1-acyl-sn-glycero-3-phosphocholine + an acyl-CoA = a 1,2-diacyl-sn-glycero-3-phosphocholine + CoA. It carries out the reaction 1-hexadecanoyl-sn-glycero-3-phosphocholine + hexadecanoyl-CoA = 1,2-dihexadecanoyl-sn-glycero-3-phosphocholine + CoA. The catalysed reaction is 1,2-dihexadecanoyl-sn-glycero-3-phosphocholine + H2O = 1-hexadecanoyl-sn-glycero-3-phosphocholine + hexadecanoate + H(+). MJ33 or lithium;[(2R)-1-hexadecoxy-3-(2,2,2-trifluoroethoxy)propan-2-yl] methyl phosphate inhibits its phospholipase A2 activity. CI-976 or 2,2-Dimethyl-N-(2,4,6-trimethoxyphenyl)dodecanamide inhibits its lysophosphatidylcholine acyltransferase activity. Its function is as follows. Thiol-specific peroxidase that catalyzes the reduction of hydrogen peroxide and organic hydroperoxides to water and alcohols, respectively. Can reduce H(2)O(2) and short chain organic, fatty acid, and phospholipid hydroperoxides. Also has phospholipase activity, can therefore either reduce the oxidized sn-2 fatty acyl group of phospholipids (peroxidase activity) or hydrolyze the sn-2 ester bond of phospholipids (phospholipase activity). These activities are dependent on binding to phospholipids at acidic pH and to oxidized phospholipds at cytosolic pH. Plays a role in cell protection against oxidative stress by detoxifying peroxides and in phospholipid homeostasis. Exhibits acyl-CoA-dependent lysophospholipid acyltransferase which mediates the conversion of lysophosphatidylcholine (1-acyl-sn-glycero-3-phosphocholine or LPC) into phosphatidylcholine (1,2-diacyl-sn-glycero-3-phosphocholine or PC). Shows a clear preference for LPC as the lysophospholipid and for palmitoyl CoA as the fatty acyl substrate. The protein is Peroxiredoxin-6 (PRDX6) of Homo sapiens (Human).